Here is a 505-residue protein sequence, read N- to C-terminus: MEKVLVVNFGGQYAHLIARRIREVGVYAEIASPEEAVIKASKEEVKAVILSGGPSSVYEPGAPDIDEGIFALSKPVLGICYGHQMIAKKLGGKVERGKGEYGKTIVKILVNDPLFDGWKPEEAVWMSHSDFVEEPPPGFHVLAISENGYIAAMRKGLIYGVQFHPEVHHTSKGRVMFENFLRKIARISDVWRPEDQITRIVEEIRSRVKGGDVIVGVSGGVDSTVTAVLLYKAVGQRVKAVFIDHGLFREGEPEEAASLLKSIGIDVVYIDAKERFLKRLEGVADCEEKRRIIGETFAEVFSDAVKQMPNVKYLAQGTLYPDVVESGAVKGADKIKSHHNVGGLPPWFQLELIEPLREFYKDEVRRIAKALGLPEDVVYRHPFPGPGLAVRIIGPFTREKLAIVRKATKIVEEELRKAGLFRKVWQAFATVGEDKWVGVKGDRRAMGYIVTVRIVESEDAMTADWSRIPFEILEKISSRITSEIPEVTMVTYAVTSKPPSTIEPC.

One can recognise a Glutamine amidotransferase type-1 domain in the interval 3 to 190; that stretch reads KVLVVNFGGQ…LRKIARISDV (188 aa). C80 (nucleophile) is an active-site residue. Active-site residues include H164 and E166. The GMPS ATP-PPase domain occupies 191 to 380; it reads WRPEDQITRI…LGLPEDVVYR (190 aa). Residue 218 to 224 coordinates ATP; the sequence is SGGVDST.

It catalyses the reaction XMP + L-glutamine + ATP + H2O = GMP + L-glutamate + AMP + diphosphate + 2 H(+). It participates in purine metabolism; GMP biosynthesis; GMP from XMP (L-Gln route): step 1/1. Its function is as follows. Catalyzes the synthesis of GMP from XMP. The sequence is that of GMP synthase [glutamine-hydrolyzing] from Pyrobaculum aerophilum (strain ATCC 51768 / DSM 7523 / JCM 9630 / CIP 104966 / NBRC 100827 / IM2).